Reading from the N-terminus, the 93-residue chain is Pyrimidine/purine nucleoside phosphorylase (93 aa).

It belongs to the nucleoside phosphorylase PpnP family.

It catalyses the reaction a purine D-ribonucleoside + phosphate = a purine nucleobase + alpha-D-ribose 1-phosphate. The enzyme catalyses adenosine + phosphate = alpha-D-ribose 1-phosphate + adenine. The catalysed reaction is cytidine + phosphate = cytosine + alpha-D-ribose 1-phosphate. It carries out the reaction guanosine + phosphate = alpha-D-ribose 1-phosphate + guanine. It catalyses the reaction inosine + phosphate = alpha-D-ribose 1-phosphate + hypoxanthine. The enzyme catalyses thymidine + phosphate = 2-deoxy-alpha-D-ribose 1-phosphate + thymine. The catalysed reaction is uridine + phosphate = alpha-D-ribose 1-phosphate + uracil. It carries out the reaction xanthosine + phosphate = alpha-D-ribose 1-phosphate + xanthine. Catalyzes the phosphorolysis of diverse nucleosides, yielding D-ribose 1-phosphate and the respective free bases. Can use uridine, adenosine, guanosine, cytidine, thymidine, inosine and xanthosine as substrates. Also catalyzes the reverse reactions. The protein is Pyrimidine/purine nucleoside phosphorylase of Aliivibrio fischeri (strain ATCC 700601 / ES114) (Vibrio fischeri).